Consider the following 461-residue polypeptide: Trimethylamine monooxygenase (461 aa).

Residues serine 14, glutamate 39, lysine 40, glutamine 41, methionine 47, tryptophan 48, and histidine 64 each contribute to the FAD site. Positions 72 and 74 each coordinate NADP(+). 2 residues coordinate FAD: asparagine 74 and alanine 127. Positions 206, 207, 209, 230, and 231 each coordinate NADP(+). Glutamine 319 and threonine 322 together coordinate FAD. Arginine 413 is an NADP(+) binding site.

It belongs to the FMO family. The cofactor is FAD.

The enzyme catalyses trimethylamine + NADPH + O2 = trimethylamine N-oxide + NADP(+) + H2O. In terms of biological role, catalyzes the oxidation of trimethylamine (TMA) to produce trimethylamine N-oxide (TMAO). The produced TMAO is accumulated in the cell, functioning as a piezolyte, improving both growth and survival at high hydrostatic pressure (HHP). This Myroides profundi protein is Trimethylamine monooxygenase.